Consider the following 273-residue polypeptide: 4-hydroxy-tetrahydrodipicolinate reductase (273 aa).

NAD(+) contacts are provided by residues 12-17 (GAGGRM) and glutamate 38. Position 39 (arginine 39) interacts with NADP(+). NAD(+) is bound by residues 102–104 (GTT) and 126–129 (AANF). The active-site Proton donor/acceptor is histidine 159. Histidine 160 is a (S)-2,3,4,5-tetrahydrodipicolinate binding site. Residue lysine 163 is the Proton donor of the active site. (S)-2,3,4,5-tetrahydrodipicolinate is bound at residue 169–170 (GT).

Belongs to the DapB family. In terms of assembly, homotetramer.

It localises to the cytoplasm. The enzyme catalyses (S)-2,3,4,5-tetrahydrodipicolinate + NAD(+) + H2O = (2S,4S)-4-hydroxy-2,3,4,5-tetrahydrodipicolinate + NADH + H(+). The catalysed reaction is (S)-2,3,4,5-tetrahydrodipicolinate + NADP(+) + H2O = (2S,4S)-4-hydroxy-2,3,4,5-tetrahydrodipicolinate + NADPH + H(+). It functions in the pathway amino-acid biosynthesis; L-lysine biosynthesis via DAP pathway; (S)-tetrahydrodipicolinate from L-aspartate: step 4/4. Functionally, catalyzes the conversion of 4-hydroxy-tetrahydrodipicolinate (HTPA) to tetrahydrodipicolinate. In Salmonella choleraesuis (strain SC-B67), this protein is 4-hydroxy-tetrahydrodipicolinate reductase.